Reading from the N-terminus, the 452-residue chain is UDP-glycosyltransferase 79B11 (452 aa).

UDP-alpha-D-glucose is bound by residues Ser-260, 319-325 (VQQPSWQ), 340-348 (HCGFGSMWE), and 362-365 (LNDQ).

Belongs to the UDP-glycosyltransferase family.

The protein is UDP-glycosyltransferase 79B11 (UGT79B11) of Arabidopsis thaliana (Mouse-ear cress).